A 614-amino-acid polypeptide reads, in one-letter code: Spastin (614 aa).

The interval 1 to 45 (MNSPGGRGKKKGSGGPSSPVPPRPPPPCQARSRPAPKPAPPPQSP) is disordered. The interval 1 to 50 (MNSPGGRGKKKGSGGPSSPVPPRPPPPCQARSRPAPKPAPPPQSPHKRNL) is required for nuclear localization. Residues 1–56 (MNSPGGRGKKKGSGGPSSPVPPRPPPPCQARSRPAPKPAPPPQSPHKRNLYYFSYP) lie on the Cytoplasmic side of the membrane. Residues 1 to 80 (MNSPGGRGKK…LGLLFVWLCQ (80 aa)) are required for interaction with ATL1. The required for midbody localization stretch occupies residues 1-192 (MNSPGGRGKK…LVMAKDRLQL (192 aa)). The tract at residues 1–298 (MNSPGGRGKK…STPKTNRTNK (298 aa)) is required for interaction with RTN1. A Nuclear localization signal motif is present at residues 4–11 (PGGRGKKK). Pro residues-rich tracts occupy residues 18–28 (SPVPPRPPPPC) and 35–44 (APKPAPPPQS). The required for interaction with SSNA1 and microtubules stretch occupies residues 50-87 (LYYFSYPLFLGFALLRLVAFHLGLLFVWLCQRFSRALM). The segment at residues 57-77 (LFLGFALLRLVAFHLGLLFVW) is an intramembrane region (helical). The Nuclear export signal signature appears at 59–67 (LGFALLRLV). At 78–614 (LCQRFSRALM…WNKDFGDTTV (537 aa)) the chain is on the cytoplasmic side. The tract at residues 110–194 (EAERVRAFHK…MAKDRLQLLE (85 aa)) is sufficient for interaction with CHMP1B. Residues 112–198 (ERVRAFHKQA…RLQLLEKLQP (87 aa)) form a required for interaction with microtubules region. The region spanning 118-193 (HKQAFEYISV…VMAKDRLQLL (76 aa)) is the MIT domain. Residues 220-310 (NGHLQSESGA…TPTTAARKKK (91 aa)) form a disordered region. Residues 226 to 614 (ESGAVPKRKD…WNKDFGDTTV (389 aa)) form a sufficient for microtubule severing region. 2 positions are modified to phosphoserine: Ser243 and Ser266. The required for interaction with microtubules and microtubule severing stretch occupies residues 268–326 (SGLSMVSGVRQGPGSAAATHKSTPKTNRTNKPSTPTTAARKKKDLKNFRNVDSNLANLI). Residues 287–304 (HKSTPKTNRTNKPSTPTT) show a composition bias toward polar residues. The residue at position 304 (Thr304) is a Phosphothreonine. The Nuclear localization signal signature appears at 307 to 310 (RKKK). 380–387 (GPPGNGKT) is an ATP binding site. Ser595 carries the post-translational modification Phosphoserine.

Belongs to the AAA ATPase family. Spastin subfamily. Homohexamer. Mostly monomeric, but assembles into hexameric structure for short periods of time. Oligomerization seems to be a prerequisite for catalytic activity. Binding to ATP in a cleft between two adjacent subunits stabilizes the homohexameric form. Binds to microtubules at least in part via the alpha-tubulin and beta-tubulin tails. The hexamer adopts a ring conformation through which microtubules pass prior to being severed. Does not interact strongly with tubulin heterodimers. Interacts (via MIT domain) with CHMP1B; the interaction is direct. Interacts with SSNA1. Interacts with ATL1. Interacts with RTN1. Interacts with ZFYVE27. Interacts with REEP1. Interacts (via MIT domain) with IST1.

Its subcellular location is the membrane. It localises to the endoplasmic reticulum. The protein localises to the midbody. The protein resides in the cytoplasm. It is found in the cytoskeleton. Its subcellular location is the microtubule organizing center. It localises to the centrosome. The protein localises to the perinuclear region. The protein resides in the nucleus. It is found in the spindle. Its subcellular location is the cell projection. It localises to the axon. The enzyme catalyses n ATP + n H2O + a microtubule = n ADP + n phosphate + (n+1) alpha/beta tubulin heterodimers.. With respect to regulation, allosteric enzyme with a cooperative mechanism; at least two neighbor subunits influence each other strongly in spastin hexamers. Microtubule binding promotes cooperative interactions among spastin subunits. ATP-dependent microtubule severing protein that specifically recognizes and cuts microtubules that are polyglutamylated. Preferentially recognizes and acts on microtubules decorated with short polyglutamate tails: severing activity increases as the number of glutamates per tubulin rises from one to eight, but decreases beyond this glutamylation threshold. Severing activity is not dependent on tubulin acetylation or detyrosination. Microtubule severing promotes reorganization of cellular microtubule arrays and the release of microtubules from the centrosome following nucleation. It is critical for the biogenesis and maintenance of complex microtubule arrays in axons, spindles and cilia. SPAST is involved in abscission step of cytokinesis and nuclear envelope reassembly during anaphase in cooperation with the ESCRT-III complex. Recruited at the midbody, probably by IST1, and participates in membrane fission during abscission together with the ESCRT-III complex. Recruited to the nuclear membrane by IST1 and mediates microtubule severing, promoting nuclear envelope sealing and mitotic spindle disassembly during late anaphase. Required for membrane traffic from the endoplasmic reticulum (ER) to the Golgi and endosome recycling. Recruited by IST1 to endosomes and regulates early endosomal tubulation and recycling by mediating microtubule severing. Probably plays a role in axon growth and the formation of axonal branches. The sequence is that of Spastin from Bos taurus (Bovine).